Reading from the N-terminus, the 714-residue chain is Cadherin-13 (714 aa).

An N-terminal signal peptide occupies residues 1 to 22 (MQPRTPLTLCVLLSQVLLVTSA). Residues 23 to 138 (DDLECTPGFQ…RTSPVPRQKR (116 aa)) constitute a propeptide that is removed on maturation. 5 Cadherin domains span residues 143–245 (SPIL…RPIF), 246–363 (REGP…SPKF), 364–477 (TKKE…GPVF), 478–585 (YPDP…APVI), and 586–680 (YPTV…VQVC). A disordered region spans residues 156 to 183 (PRDVGKVVDSDRPEGSKFRLTGKGVDQD). The segment covering 158-172 (DVGKVVDSDRPEGSK) has biased composition (basic and acidic residues). Residues N382, N489, N500, N530, N598, N638, and N671 are each glycosylated (N-linked (GlcNAc...) asparagine). G693 carries the GPI-anchor amidated glycine lipid modification. A propeptide spans 694–714 (ALHLSLSLLLLFSLLSLLSGL) (removed in mature form).

As to quaternary structure, by contrast to classical cadherins, homodimerization in trans is not mediated by cadherin EC1 domain strand-swapping, but instead through a homophilic adhesive interface which joins two elongated EC1-EC2 domains through a region near their Ca2+-binding sites to form a tetrahedral, X-like shape.

The protein localises to the cell membrane. It is found in the cytoplasm. Its function is as follows. Cadherins are calcium-dependent cell adhesion proteins. They preferentially interact with themselves in a homophilic manner in connecting cells; cadherins may thus contribute to the sorting of heterogeneous cell types. May act as a negative regulator of neural cell growth. The sequence is that of Cadherin-13 (Cdh13) from Mus musculus (Mouse).